The following is a 589-amino-acid chain: Guanylate-binding protein 1 (589 aa).

Residues 1-309 (MASEIHMSEP…SAICSGELPC (309 aa)) form a GTPase domain (Globular) region. A GB1/RHD3-type G domain is found at 35–276 (TQPVVVVAIV…FTSYIFSYSG (242 aa)). Residues 47–53 (YRTGKSY), 67–69 (LGS), and 97–101 (DTEGL) each bind GTP. Ser-156 bears the Phosphoserine mark. The residue at position 586 (Cys-586) is a Cysteine methyl ester. Cys-586 is lipidated: S-farnesyl cysteine. Cys-586 is lipidated: S-geranylgeranyl cysteine; partial. Thr-587 bears the Phosphothreonine mark. The propeptide at 587–589 (TIL) is removed in mature form.

The protein belongs to the TRAFAC class dynamin-like GTPase superfamily. GB1/RHD3 GTPase family. GB1 subfamily. As to quaternary structure, homodimer; homodimerization occurs upon GTP-binding and is required for the second hydrolysis step from GDP to GMP. Undergoes conformational changes and oligomerization upon GTP-binding and hydrolysis. Heterodimer with other family members, including GBP2, GBP3, GBP4 and GBP5. Dimerization regulates subcellular location to membranous structures. Interacts with SQSTM1. Interacts (when phosphorylated) with 14-3-3 protein sigma (SFN); leading to GBP1 retention in the cytosol and inactivation. In terms of processing, isoprenylation of mouse GBP1 is incomplete. It persistently exists in the cell as a mixture of C20-modified and (more predominantly) unmodified form. Isoprenylation is required for proper subcellular location. Phosphorylated at Ser-156 by PIM1 in absence of infection, inhibits GBP1: phosphorylation promotes interaction with 14-3-3 protein sigma (SFN), leading to GBP1 retention in the cytosol. Dephosphorylated in response to infection, liberating GBP1.

The protein localises to the cytoplasmic vesicle membrane. The protein resides in the golgi apparatus membrane. It localises to the cell membrane. Its subcellular location is the cytoplasm. It is found in the cytosol. The protein localises to the secreted. The enzyme catalyses GTP + H2O = GDP + phosphate + H(+). The catalysed reaction is GDP + H2O = GMP + phosphate + H(+). Its function is as follows. Interferon (IFN)-inducible GTPase that plays important roles in innate immunity against a diverse range of bacterial, viral and protozoan pathogens. Hydrolyzes GTP to GMP in two consecutive cleavage reactions: GTP is first hydrolyzed to GDP and then to GMP in a processive manner. Following infection, recruited to the pathogen-containing vacuoles or vacuole-escaped bacteria and promotes both inflammasome assembly and autophagy. Acts as a positive regulator of inflammasome assembly by facilitating the detection of inflammasome ligands from pathogens. Involved in the lysis of pathogen-containing vacuoles, releasing pathogens into the cytosol. Following pathogen release in the cytosol, forms a protein coat in a GTPase-dependent manner that encapsulates pathogens and promotes the detection of ligands by pattern recognition receptors. Plays a key role in inflammasome assembly in response to infection by Gram-negative bacteria: following pathogen release in the cytosol, forms a protein coat that encapsulates Gram-negative bacteria and directly binds to lipopolysaccharide (LPS), disrupting the O-antigen barrier and unmasking lipid A that is that detected by the non-canonical inflammasome effector CASP4/CASP11. Also promotes recruitment of proteins that mediate bacterial cytolysis, leading to release double-stranded DNA (dsDNA) that activates the AIM2 inflammasome. Involved in autophagy by regulating bacteriolytic peptide generation via its interaction with ubiquitin-binding protein SQSTM1, which delivers monoubiquitinated proteins to autolysosomes for the generation of bacteriolytic peptides. Confers protection to several pathogens, including the bacterial pathogens L.monocytogenes and M.bovis BCG as well as the protozoan pathogen T.gondii. Exhibits antiviral activity against influenza virus. The sequence is that of Guanylate-binding protein 1 (Gbp1) from Mus musculus (Mouse).